Reading from the N-terminus, the 122-residue chain is UPF0382 membrane protein SE_0353 (122 aa).

The next 4 helical transmembrane spans lie at 3–23 (VFIILGALNAMMAVGTGAFGA), 46–66 (MYHGLGLLVIGLISGTTSINV), 69–89 (AGWLLFFGIVFFSGSLYFLAL), and 98–118 (ITPIGGVLFIIGWLVLVIATL).

This sequence belongs to the UPF0382 family.

It is found in the cell membrane. This is UPF0382 membrane protein SE_0353 from Staphylococcus epidermidis (strain ATCC 12228 / FDA PCI 1200).